A 147-amino-acid chain; its full sequence is Hemoglobin subunit beta (147 aa).

At Val2 the chain carries N-acetylvaline. Residues 3–147 (HLSGDEKNAV…VANALAHRYH (145 aa)) enclose the Globin domain. The residue at position 45 (Ser45) is a Phosphoserine. The residue at position 60 (Lys60) is an N6-acetyllysine. Residue His64 coordinates heme b. Lys83 bears the N6-acetyllysine mark. Position 93 (His93) interacts with heme b. Position 94 is an S-nitrosocysteine (Cys94).

This sequence belongs to the globin family. Heterotetramer of two alpha chains and two beta chains. In terms of tissue distribution, red blood cells.

Involved in oxygen transport from the lung to the various peripheral tissues. This is Hemoglobin subunit beta (HBB) from Camelus dromedarius (Dromedary).